Here is a 1396-residue protein sequence, read N- to C-terminus: DNA-directed RNA polymerase subunit beta' (1396 aa).

Zn(2+)-binding residues include C72, C74, C87, and C90. Mg(2+) contacts are provided by D463, D465, and D467. 4 residues coordinate Zn(2+): C814, C889, C896, and C899.

This sequence belongs to the RNA polymerase beta' chain family. In terms of assembly, the RNAP catalytic core consists of 2 alpha, 1 beta, 1 beta' and 1 omega subunit. When a sigma factor is associated with the core the holoenzyme is formed, which can initiate transcription. It depends on Mg(2+) as a cofactor. Requires Zn(2+) as cofactor.

It catalyses the reaction RNA(n) + a ribonucleoside 5'-triphosphate = RNA(n+1) + diphosphate. Functionally, DNA-dependent RNA polymerase catalyzes the transcription of DNA into RNA using the four ribonucleoside triphosphates as substrates. This is DNA-directed RNA polymerase subunit beta' from Chlamydia trachomatis serovar A (strain ATCC VR-571B / DSM 19440 / HAR-13).